We begin with the raw amino-acid sequence, 92 residues long: MSQSRPLALLVVAALVAAAVLVAAAEAQQADGNKLEGLADALKYLQELDRYYSQVARPRFGKRAELRPDVVDDVIPEEMSADKFWRRFARRR.

Positions 1–27 (MSQSRPLALLVVAALVAAAVLVAAAEA) are cleaved as a signal peptide. A propeptide spanning residues 28-51 (QQADGNKLEGLADALKYLQELDRY) is cleaved from the precursor. Phe-60 is modified (phenylalanine amide). Positions 64–92 (AELRPDVVDDVIPEEMSADKFWRRFARRR) are excised as a propeptide.

It belongs to the NPY family. In terms of tissue distribution, widely expressed in the nervous system. Expressed in corpora cardiaca, hypocerebral ganglion, frontal ganglion, protocerebrum, antennal lobe, tritocerebrum and thoracic ganglia. Not detected in corpora allata, pars intercerebralis, circumesophageal connectives, subesophageal ganglion, abdominal ganglion and abdominal perisympathetic organs.

It localises to the secreted. Accelerates ovarian maturation in females. The chain is Neuropeptide F from Locusta migratoria (Migratory locust).